The following is a 234-amino-acid chain: Small ribosomal subunit protein uS2c (234 aa).

It belongs to the universal ribosomal protein uS2 family.

It is found in the plastid. The protein localises to the chloroplast. This Pinus koraiensis (Korean pine) protein is Small ribosomal subunit protein uS2c (rps2).